Reading from the N-terminus, the 482-residue chain is Putative ankyrin repeat protein FPV232 (482 aa).

9 ANK repeats span residues 36-65 (IPLI…NVNE), 69-100 (RYLT…DLSS), 101-128 (YEER…DGNR), 129-161 (TIDD…DTKI), 166-195 (KLKT…EVNS), 199-228 (GNNS…NTDH), 232-265 (CGTT…SVNI), 270-297 (LGFT…DPNI), and 301-332 (EKET…LRAF).

The chain is Putative ankyrin repeat protein FPV232 from Fowlpox virus (strain NVSL) (FPV).